A 441-amino-acid polypeptide reads, in one-letter code: uncharacterized protein (441 aa).

The next 12 helical transmembrane spans lie at 21–41, 51–71, 94–114, 118–138, 150–170, 195–215, 239–259, 260–280, 291–311, 334–354, 363–383, and 419–439; these read VVVA…MSLG, LGGG…AVAI, AAST…VTMS, VIPV…GVFA, VLTF…GGIF, AMLL…FVSY, QHIL…LYTG, SMII…VIAW, VHMM…AAVM, LAAL…GSSF, IYVP…ALVG, and VVPT…IAAM.

Its subcellular location is the cell membrane. This is an uncharacterized protein from Vibrio parahaemolyticus serotype O3:K6 (strain RIMD 2210633).